The following is a 337-amino-acid chain: Inositol 2-dehydrogenase (337 aa).

Belongs to the Gfo/Idh/MocA family. As to quaternary structure, homotetramer.

It catalyses the reaction myo-inositol + NAD(+) = scyllo-inosose + NADH + H(+). In terms of biological role, involved in the oxidation of myo-inositol (MI) to 2-keto-myo-inositol (2KMI or 2-inosose). The sequence is that of Inositol 2-dehydrogenase from Corynebacterium glutamicum (strain R).